A 651-amino-acid polypeptide reads, in one-letter code: UvrABC system protein C (651 aa).

One can recognise a GIY-YIG domain in the interval 20-97; it reads ERCGVYRMFD…IKKFQPKFNI (78 aa). The UVR domain maps to 207–242; that stretch reads KALQENLSKKMEELSSQMRFEEAAEIRDRIKALSYV.

This sequence belongs to the UvrC family. In terms of assembly, interacts with UvrB in an incision complex.

The protein localises to the cytoplasm. Its function is as follows. The UvrABC repair system catalyzes the recognition and processing of DNA lesions. UvrC both incises the 5' and 3' sides of the lesion. The N-terminal half is responsible for the 3' incision and the C-terminal half is responsible for the 5' incision. This Rickettsia akari (strain Hartford) protein is UvrABC system protein C.